Consider the following 354-residue polypeptide: Methylthioribose-1-phosphate isomerase (354 aa).

Substrate-binding positions include 45–47 (RGA), Arg-87, and Gln-204. Asp-245 functions as the Proton donor in the catalytic mechanism. Residue 255–256 (NK) coordinates substrate.

It belongs to the eIF-2B alpha/beta/delta subunits family. MtnA subfamily.

The enzyme catalyses 5-(methylsulfanyl)-alpha-D-ribose 1-phosphate = 5-(methylsulfanyl)-D-ribulose 1-phosphate. The protein operates within amino-acid biosynthesis; L-methionine biosynthesis via salvage pathway; L-methionine from S-methyl-5-thio-alpha-D-ribose 1-phosphate: step 1/6. Its function is as follows. Catalyzes the interconversion of methylthioribose-1-phosphate (MTR-1-P) into methylthioribulose-1-phosphate (MTRu-1-P). The chain is Methylthioribose-1-phosphate isomerase from Chlorobaculum tepidum (strain ATCC 49652 / DSM 12025 / NBRC 103806 / TLS) (Chlorobium tepidum).